A 211-amino-acid polypeptide reads, in one-letter code: Urease accessory protein UreF (211 aa).

The disordered stretch occupies residues 68 to 93 (LAPDGADRETDARTPSPAARDASRSQ).

Belongs to the UreF family. In terms of assembly, ureD, UreF and UreG form a complex that acts as a GTP-hydrolysis-dependent molecular chaperone, activating the urease apoprotein by helping to assemble the nickel containing metallocenter of UreC. The UreE protein probably delivers the nickel.

The protein localises to the cytoplasm. Functionally, required for maturation of urease via the functional incorporation of the urease nickel metallocenter. In Mycobacterium marinum (strain ATCC BAA-535 / M), this protein is Urease accessory protein UreF.